The chain runs to 287 residues: Rhodopsin (287 aa).

The Extracellular portion of the chain corresponds to 1–5 (VNGAA). The helical transmembrane segment at 6–30 (YAGLCAYMFLLILVGFPVNFLTLYV) threads the bilayer. Residues 31-42 (TLEHKKLRTPLN) are Cytoplasmic-facing. A helical transmembrane segment spans residues 43 to 65 (YILLNLAVADLFMVLGGFTTTMY). The Extracellular segment spans residues 66–79 (TSAHGYFVLGRLGC). A disulfide bridge connects residues Cys-79 and Cys-156. Residues 80–102 (NVEGFFATLGGEIALWSLVVLAV) form a helical membrane-spanning segment. Residues 103–105 (ERW) carry the 'Ionic lock' involved in activated form stabilization motif. Topologically, residues 103-121 (ERWIVVCKPISNFRFTEEH) are cytoplasmic. Residues 122–142 (AIMGLGFNWVMASACAVPPLV) traverse the membrane as a helical segment. The Extracellular portion of the chain corresponds to 143–171 (GWSRYIPEGMQCSCGINYYTRSEGFNNES). Residue Asn-169 is glycosylated (N-linked (GlcNAc...) asparagine). A helical membrane pass occupies residues 172–193 (LVMKMLICHFLIPLFVIFFCYG). Residues 194 to 221 (RMLCAVKEAAAAQQESETTQRAEREVSR) lie on the Cytoplasmic side of the membrane. A helical membrane pass occupies residues 222–243 (MVVIMVISFLVCWLPYASVAWY). Residues 244–255 (IFCNQGSEFGPV) are Extracellular-facing. Residues 256–277 (FMTLPAFFAKSASIYNPLIYIC) traverse the membrane as a helical segment. At Lys-265 the chain carries N6-(retinylidene)lysine. Topologically, residues 278–287 (MNKHSRHCMI) are cytoplasmic.

This sequence belongs to the G-protein coupled receptor 1 family. Opsin subfamily. Post-translationally, phosphorylated on some or all of the serine and threonine residues present in the C-terminal region. Contains one covalently linked retinal chromophore.

It is found in the membrane. It localises to the cell projection. The protein localises to the cilium. The protein resides in the photoreceptor outer segment. Photoreceptor required for image-forming vision at low light intensity. While most salt water fish species use retinal as chromophore, most freshwater fish use 3-dehydroretinal, or a mixture of retinal and 3-dehydroretinal. Light-induced isomerization of 11-cis to all-trans retinal triggers a conformational change that activates signaling via G-proteins. Subsequent receptor phosphorylation mediates displacement of the bound G-protein alpha subunit by arrestin and terminates signaling. This Taurulus bubalis (Long-spined sea scorpion) protein is Rhodopsin (rho).